Here is a 469-residue protein sequence, read N- to C-terminus: Adenosylhomocysteinase (469 aa).

Residues T63, D139, and E164 each coordinate substrate. Residue 165–167 (TTT) coordinates NAD(+). Positions 194 and 198 each coordinate substrate. Residues N199, 228–233 (GYGDVG), E251, N300, 321–323 (IGH), and N375 contribute to the NAD(+) site.

Belongs to the adenosylhomocysteinase family. The cofactor is NAD(+).

The protein localises to the cytoplasm. It catalyses the reaction S-adenosyl-L-homocysteine + H2O = L-homocysteine + adenosine. Its pathway is amino-acid biosynthesis; L-homocysteine biosynthesis; L-homocysteine from S-adenosyl-L-homocysteine: step 1/1. May play a key role in the regulation of the intracellular concentration of adenosylhomocysteine. This chain is Adenosylhomocysteinase, found in Ectopseudomonas mendocina (strain ymp) (Pseudomonas mendocina).